Here is a 194-residue protein sequence, read N- to C-terminus: MAPLVLYLLTLLMAGHTSASWCVCKTGLSDSVLQKTLDYACGNGADCNPTHPKGSCFNPDNVRAHCNYAVNSFFQKKGQASESCNFTGTATLTTTDPSYTGCAFPSSASGSSGSGSTTVTPGKNSPKGSNSITTFPGGNSPYSGTPSTGLLGGNITDATGTGLNPDYSTESSGFALYYSNNLLLTGFCSLVMML.

The N-terminal stretch at 1 to 16 (MAPLVLYLLTLLMAGH) is a signal peptide. Residues C22 and C84 are joined by a disulfide bond. N-linked (GlcNAc...) asparagine glycosylation occurs at N85. Over residues 106–116 (SSASGSSGSGS) the composition is skewed to low complexity. Residues 106-140 (SSASGSSGSGSTTVTPGKNSPKGSNSITTFPGGNS) form a disordered region. A compositionally biased stretch (polar residues) spans 117 to 140 (TTVTPGKNSPKGSNSITTFPGGNS). The N-linked (GlcNAc...) asparagine glycan is linked to N154. The GPI-anchor amidated serine moiety is linked to residue S171. Residues 172 to 194 (SGFALYYSNNLLLTGFCSLVMML) constitute a propeptide, removed in mature form.

In terms of processing, contains two additional disulfide bonds. As to expression, expressed in the shoot apical region and in young leaves but also detected in the laminar and vasculature of mature leaves.

It localises to the cell membrane. Its subcellular location is the cell junction. The protein localises to the plasmodesma. In terms of biological role, able to bind (1-&gt;3)-beta-D-glucans (laminarin). The chain is PLASMODESMATA CALLOSE-BINDING PROTEIN 2 (PDCB2) from Arabidopsis thaliana (Mouse-ear cress).